Consider the following 389-residue polypeptide: S-adenosylmethionine synthase (389 aa).

Histidine 17 is an ATP binding site. Aspartate 19 contacts Mg(2+). Glutamate 45 is a binding site for K(+). Positions 58 and 101 each coordinate L-methionine. The tract at residues 101 to 111 (QSPDISQGVTE) is flexible loop. Residues 168 to 170 (DSK), 234 to 235 (RF), aspartate 243, 249 to 250 (RK), alanine 266, and lysine 270 contribute to the ATP site. Aspartate 243 lines the L-methionine pocket. Residue lysine 274 coordinates L-methionine.

This sequence belongs to the AdoMet synthase family. Homotetramer; dimer of dimers. The cofactor is Mg(2+). Requires K(+) as cofactor.

Its subcellular location is the cytoplasm. It catalyses the reaction L-methionine + ATP + H2O = S-adenosyl-L-methionine + phosphate + diphosphate. The protein operates within amino-acid biosynthesis; S-adenosyl-L-methionine biosynthesis; S-adenosyl-L-methionine from L-methionine: step 1/1. Catalyzes the formation of S-adenosylmethionine (AdoMet) from methionine and ATP. The overall synthetic reaction is composed of two sequential steps, AdoMet formation and the subsequent tripolyphosphate hydrolysis which occurs prior to release of AdoMet from the enzyme. This chain is S-adenosylmethionine synthase, found in Syntrophotalea carbinolica (strain DSM 2380 / NBRC 103641 / GraBd1) (Pelobacter carbinolicus).